Here is a 505-residue protein sequence, read N- to C-terminus: Betaine aldehyde dehydrogenase (505 aa).

Position 239–244 (239–244 (GSTATG)) interacts with NAD(+). Glutamate 261 serves as the catalytic Proton acceptor. Cysteine 296 functions as the Nucleophile in the catalytic mechanism. Residues 503–505 (SKL) carry the Microbody targeting signal motif.

The protein belongs to the aldehyde dehydrogenase family. As to quaternary structure, homodimer.

It localises to the peroxisome. The catalysed reaction is betaine aldehyde + NAD(+) + H2O = glycine betaine + NADH + 2 H(+). It participates in amine and polyamine biosynthesis; betaine biosynthesis via choline pathway; betaine from betaine aldehyde: step 1/1. The polypeptide is Betaine aldehyde dehydrogenase (Hordeum vulgare (Barley)).